The following is a 115-amino-acid chain: Na(+)/H(+) antiporter subunit C1 (115 aa).

The next 3 helical transmembrane spans lie at 1 to 21 (MEILMIFVCGILTAMSVYLIL), 28 to 48 (IIIGTTLQTHTANLFLITMGG), and 72 to 92 (LILTAIVISFSVTAFFLVLAF).

The protein belongs to the CPA3 antiporters (TC 2.A.63) subunit C family. In terms of assembly, may form a heterooligomeric complex that consists of seven subunits: mnhA1, mnhB1, mnhC1, mnhD1, mnhE1, mnhF1 and mnhG1.

It localises to the cell membrane. Functionally, mnh complex is a Na(+)/H(+) antiporter involved in Na(+) excretion. In Staphylococcus saprophyticus subsp. saprophyticus (strain ATCC 15305 / DSM 20229 / NCIMB 8711 / NCTC 7292 / S-41), this protein is Na(+)/H(+) antiporter subunit C1 (mnhC1).